A 712-amino-acid polypeptide reads, in one-letter code: Ribosomal RNA large subunit methyltransferase K/L (712 aa).

One can recognise a THUMP domain in the interval 43-154 (TAYRCCLWTR…GEKGVLGLDM (112 aa)).

This sequence belongs to the methyltransferase superfamily. RlmKL family.

The protein resides in the cytoplasm. The enzyme catalyses guanosine(2445) in 23S rRNA + S-adenosyl-L-methionine = N(2)-methylguanosine(2445) in 23S rRNA + S-adenosyl-L-homocysteine + H(+). The catalysed reaction is guanosine(2069) in 23S rRNA + S-adenosyl-L-methionine = N(2)-methylguanosine(2069) in 23S rRNA + S-adenosyl-L-homocysteine + H(+). Its function is as follows. Specifically methylates the guanine in position 2445 (m2G2445) and the guanine in position 2069 (m7G2069) of 23S rRNA. The sequence is that of Ribosomal RNA large subunit methyltransferase K/L from Photobacterium profundum (strain SS9).